A 430-amino-acid polypeptide reads, in one-letter code: Probable transporter SCO4007 (430 aa).

A compositionally biased stretch (low complexity) spans 1 to 17; that stretch reads MPSSPSSTTPAPTSTPA. Positions 1–26 are disordered; the sequence is MPSSPSSTTPAPTSTPAARREPSGKG. 11 consecutive transmembrane segments (helical) span residues 34–54, 70–90, 101–121, 126–146, 159–179, 188–208, 244–264, 275–295, 315–335, 362–382, and 383–403; these read LFLPLIALCTAVTAANIYLAA, AVAWLASVAQLGYAAGLLFFA, LVAALSLVATAALLTAAASAG, AGAVLVASAATVVPQLLVPLV, VAAVIAGLFTGVVAARVLGGL, AVFVGAAVLTAVLGLATAYIL, AGMYGAWSALWTSLALLLTEG, GLFGLFGLAASVVAPLAGGLV, VPLFWLGGQVMAALCAAAVLV, TAYVVAGFAGGALASALAGPA, and FGHWGWGGVCAVAGAWLVLGW.

Belongs to the major facilitator superfamily.

It localises to the cell membrane. The chain is Probable transporter SCO4007 from Streptomyces coelicolor (strain ATCC BAA-471 / A3(2) / M145).